The chain runs to 1180 residues: Chitin synthase 6 (1180 aa).

Transmembrane regions (helical) follow at residues 108–128 (FTIC…IIAF) and 374–394 (LLLA…IAAL). N-linked (GlcNAc...) asparagine glycosylation is present at Asn-737. The next 3 helical transmembrane spans lie at 762 to 782 (FIVF…VYLV), 795 to 815 (IPYI…ILFL), and 822 to 842 (YIGW…FLPI). One can recognise a DEK-C domain in the interval 1118–1175 (DPTDEEIKSAVQTYLANQPSLMNVTKRSVREALVAAFPNAELSYKKSMINKAIDDTLS).

Belongs to the chitin synthase family. Class V subfamily.

It localises to the cell membrane. Its subcellular location is the cytoplasmic vesicle membrane. The enzyme catalyses [(1-&gt;4)-N-acetyl-beta-D-glucosaminyl](n) + UDP-N-acetyl-alpha-D-glucosamine = [(1-&gt;4)-N-acetyl-beta-D-glucosaminyl](n+1) + UDP + H(+). Polymerizes chitin, a structural polymer of the cell wall and septum, by transferring the sugar moiety of UDP-GlcNAc to the non-reducing end of the growing chitin polymer. Plays a crucial role during infection and allows the fungus to overcome the resistance of the plant that checks growth of the pathogen and eventually eliminates it. The polypeptide is Chitin synthase 6 (Mycosarcoma maydis (Corn smut fungus)).